The following is a 688-amino-acid chain: Glycine--tRNA ligase beta subunit (688 aa).

It belongs to the class-II aminoacyl-tRNA synthetase family. Tetramer of two alpha and two beta subunits.

It is found in the cytoplasm. The catalysed reaction is tRNA(Gly) + glycine + ATP = glycyl-tRNA(Gly) + AMP + diphosphate. This is Glycine--tRNA ligase beta subunit from Haemophilus influenzae (strain PittGG).